A 366-amino-acid polypeptide reads, in one-letter code: UDP-GlcNAc:ribostamycin N-acetylglucosaminyltransferase (366 aa).

Low complexity predominate over residues 342 to 352; sequence AAGAGPAVPAG. The interval 342–366 is disordered; it reads AAGAGPAVPAGAGEGRGGREEEHGG. A compositionally biased stretch (basic and acidic residues) spans 357–366; sequence RGGREEEHGG.

It belongs to the glycosyltransferase group 1 family. Glycosyltransferase 4 subfamily. Requires a divalent metal cation as cofactor.

The catalysed reaction is ribostamycin + UDP-N-acetyl-alpha-D-glucosamine = 2'''-acetyl-6'''-hydroxyneomycin C + UDP + H(+). Its pathway is antibiotic biosynthesis; neomycin biosynthesis. Its function is as follows. Glycosyltransferase involved in the biosynthesis of neomycin by mediating glycosylation of ribostamycin with UDP-GlcNAc as a sugar donor to generate 2'''-acetyl-6'''-hydroxyneomycin C. In Streptomyces fradiae (Streptomyces roseoflavus), this protein is UDP-GlcNAc:ribostamycin N-acetylglucosaminyltransferase (neoK).